An 881-amino-acid polypeptide reads, in one-letter code: Protein translocase subunit SecA (881 aa).

Residues glutamine 83, 101–105 (GEGKT), and aspartate 492 contribute to the ATP site.

This sequence belongs to the SecA family.

It localises to the plastid. It is found in the chloroplast stroma. The protein localises to the chloroplast thylakoid membrane. The catalysed reaction is ATP + H2O + cellular proteinSide 1 = ADP + phosphate + cellular proteinSide 2.. Its function is as follows. Has a central role in coupling the hydrolysis of ATP to the transfer of proteins across the thylakoid membrane. This Emiliania huxleyi (Coccolithophore) protein is Protein translocase subunit SecA.